Here is a 771-residue protein sequence, read N- to C-terminus: Transducin-like enhancer protein 3-B (771 aa).

The tract at residues 1 to 141 (MYPQGRHPAP…PLTQQQLQAQ (141 aa)) is q domain. Over residues 137–148 (QLQAQHLSHAAH) the composition is skewed to low complexity. Disordered stretches follow at residues 137–174 (QLQA…GSGS) and 196–360 (HHDL…MEAL). Residues 142–209 (HLSHAAHGPP…EHRERESSTN (68 aa)) are GP domain. Over residues 196–206 (HHDLEHRERES) the composition is skewed to basic and acidic residues. Residues 207-217 (STNNSVSPSDS) are compositionally biased toward low complexity. A ccN domain region spans residues 210 to 278 (NSVSPSDSLR…TPRVSPSHSP (69 aa)). 2 stretches are compositionally biased toward basic and acidic residues: residues 219-257 (RASE…KSDD) and 282-293 (GLDKARALKKDA). Residues 235-238 (KKRR) carry the Nuclear localization signal motif. The segment at 279–451 (PENGLDKARA…GGKPAYSFHV (173 aa)) is SP domain. A compositionally biased stretch (low complexity) spans 294–309 (PNSPASVASSGSTPSS). 2 positions are modified to phosphoserine: Ser296 and Ser299. A compositionally biased stretch (basic and acidic residues) spans 310-319 (KAKDHPHNDK). Residues 320 to 332 (SSTPGLKSNTPTP) show a composition bias toward polar residues. WD repeat units follow at residues 483–521 (SHGE…SKSP), 529–568 (NRDN…PRIK), 573–612 (SSAP…LVRQ), 615–654 (GHTD…QLQQ), 656–695 (DFTS…KYQL), 697–736 (LHES…SIFQ), and 738–771 (KESS…EVIY).

It belongs to the WD repeat Groucho/TLE family. In terms of tissue distribution, at gastrulation, expression is absent within the axial mesoderm. After gastrulation is complete, expressed in the presomitic mesoderm, but expression in the tailbud doesn't begin until the six to seven somite stage, after which it becomes abundant. Expression is abundant throughout somitogenesis within the posterior half of the somites, but is absent from older somites. Also expressed in a dynamic manner within the neural plate.

It is found in the nucleus. Functionally, transcriptional corepressor that binds to a number of transcription factors. Inhibits the transcriptional activation mediated by CTNNB1 and TCF family members in Wnt signaling. The effects of full-length TLE family members may be modulated by association with dominant-negative AES. The protein is Transducin-like enhancer protein 3-B of Danio rerio (Zebrafish).